A 233-amino-acid chain; its full sequence is Large ribosomal subunit protein uL1 (233 aa).

This sequence belongs to the universal ribosomal protein uL1 family. Part of the 50S ribosomal subunit.

Its function is as follows. Binds directly to 23S rRNA. The L1 stalk is quite mobile in the ribosome, and is involved in E site tRNA release. Functionally, protein L1 is also a translational repressor protein, it controls the translation of the L11 operon by binding to its mRNA. This is Large ribosomal subunit protein uL1 from Hamiltonella defensa subsp. Acyrthosiphon pisum (strain 5AT).